The sequence spans 494 residues: UPF0371 protein stu1377 (494 aa).

It belongs to the UPF0371 family.

This Streptococcus thermophilus (strain ATCC BAA-250 / LMG 18311) protein is UPF0371 protein stu1377.